Here is a 437-residue protein sequence, read N- to C-terminus: Trigger factor (437 aa).

Positions 161-246 (DDQVNIDFVG…VNSVSAPVLP (86 aa)) constitute a PPIase FKBP-type domain.

Belongs to the FKBP-type PPIase family. Tig subfamily.

The protein resides in the cytoplasm. The enzyme catalyses [protein]-peptidylproline (omega=180) = [protein]-peptidylproline (omega=0). Involved in protein export. Acts as a chaperone by maintaining the newly synthesized protein in an open conformation. Functions as a peptidyl-prolyl cis-trans isomerase. The sequence is that of Trigger factor from Pseudomonas putida (strain GB-1).